Reading from the N-terminus, the 264-residue chain is MKQYLDLMRKVLAEGTPKADRTGTGTLSIFGHQMRFNLQQGFPLVTTKKCHLRSIIHELLWFLNGETNVSYLHENNVTIWDEWADDNGDLGPVYGKQWRAWGCADGRQVDQISQVMEQLRQEPDSRRIIVSAWNVGELDQMALAPCHAFFQFYVADGRLSCQLYQRSCDVFLGLPFNIASYALLVHMMAQQLDLQVGDFVWTGGDTHLYSNHMEQTALQLTREPRALPRLVLARRPASIFDYRFEDFIIEGYDPHPAIKAPVAV.

Position 21 (Arg21) interacts with dUMP. His51 is a (6R)-5,10-methylene-5,6,7,8-tetrahydrofolate binding site. Residue 126–127 (RR) participates in dUMP binding. Cys146 serves as the catalytic Nucleophile. Residues 166–169 (RSCD), Asn177, and 207–209 (HLY) each bind dUMP. Asp169 contributes to the (6R)-5,10-methylene-5,6,7,8-tetrahydrofolate binding site. Ala263 serves as a coordination point for (6R)-5,10-methylene-5,6,7,8-tetrahydrofolate.

The protein belongs to the thymidylate synthase family. Bacterial-type ThyA subfamily. In terms of assembly, homodimer.

The protein resides in the cytoplasm. It carries out the reaction dUMP + (6R)-5,10-methylene-5,6,7,8-tetrahydrofolate = 7,8-dihydrofolate + dTMP. It functions in the pathway pyrimidine metabolism; dTTP biosynthesis. Its function is as follows. Catalyzes the reductive methylation of 2'-deoxyuridine-5'-monophosphate (dUMP) to 2'-deoxythymidine-5'-monophosphate (dTMP) while utilizing 5,10-methylenetetrahydrofolate (mTHF) as the methyl donor and reductant in the reaction, yielding dihydrofolate (DHF) as a by-product. This enzymatic reaction provides an intracellular de novo source of dTMP, an essential precursor for DNA biosynthesis. The chain is Thymidylate synthase from Edwardsiella ictaluri (strain 93-146).